Here is a 296-residue protein sequence, read N- to C-terminus: Ribosomal RNA small subunit methyltransferase A (296 aa).

Positions 30, 32, 57, 78, 103, and 128 each coordinate S-adenosyl-L-methionine.

Belongs to the class I-like SAM-binding methyltransferase superfamily. rRNA adenine N(6)-methyltransferase family. RsmA subfamily.

It is found in the cytoplasm. The enzyme catalyses adenosine(1518)/adenosine(1519) in 16S rRNA + 4 S-adenosyl-L-methionine = N(6)-dimethyladenosine(1518)/N(6)-dimethyladenosine(1519) in 16S rRNA + 4 S-adenosyl-L-homocysteine + 4 H(+). Functionally, specifically dimethylates two adjacent adenosines (A1518 and A1519) in the loop of a conserved hairpin near the 3'-end of 16S rRNA in the 30S particle. May play a critical role in biogenesis of 30S subunits. The protein is Ribosomal RNA small subunit methyltransferase A of Staphylococcus epidermidis (strain ATCC 35984 / DSM 28319 / BCRC 17069 / CCUG 31568 / BM 3577 / RP62A).